We begin with the raw amino-acid sequence, 357 residues long: COP9 signalosome complex subunit 5a (357 aa).

Methionine 1 carries the N-acetylmethionine modification. The MPN domain maps to valine 59–glycine 196. Positions 142, 144, and 155 each coordinate Zn(2+). Positions histidine 142–aspartate 155 match the JAMM motif motif. Residues alanine 338 to serine 357 are disordered.

This sequence belongs to the peptidase M67A family. CSN5 subfamily. In terms of assembly, component of the CSN complex, probably composed of CSN1, CSN2, CSN3, CSN4, CSN5 (CSN5A or CSN5B), CSN6 (CSN6A or CSN6B), CSN7 and CSN8. CSN5A or CSN5B are present within distinct CSN complexes each containing only one copy of CSN5. Interacts with itself. In the complex, it is located in the center and probably interacts directly with CSN4 and CSN6A or CSN6B. Present also in subcomplex forms which inculdes CSN3. Also exists as monomeric form. Interacts with CYT1 in vitro, but not in planta. Requires a divalent metal cation as cofactor. As to expression, ubiquitously expressed. Highly expressed in flowers and roots. Expressed at lower level in seedlings and siliques.

It localises to the cytoplasm. The protein localises to the nucleus. Its function is as follows. Probable protease subunit of the COP9 signalosome complex (CSN), a complex involved in various cellular and developmental processes such as photomorphogenesis and auxin and jasmonate responses. The CSN complex is an essential regulator of the ubiquitin (Ubl) conjugation pathway by mediating the deneddylation of the cullin subunits of the SCF-type E3 ligase complexes, leading to decrease the Ubl ligase activity of SCF. In the complex, it probably acts as the catalytic center that mediates the cleavage of Nedd8 from cullins. It however has no metalloprotease activity by itself and requires the other subunits of the CSN complex. The CSN complex is involved in repression of photomorphogenesis in darkness by regulating the activity of COP1-containing Ubl ligase complexes. The complex is also required for degradation of PSIAA6 by regulating the activity of the Ubl ligase SCF-TIR complex. Involved in CSN's deneddylation/derubylation activity. Required for the deneddylation of all cullins. Essential for the structural integrity of the CSN holocomplex. This is COP9 signalosome complex subunit 5a from Arabidopsis thaliana (Mouse-ear cress).